Reading from the N-terminus, the 392-residue chain is Lipid-A-disaccharide synthase (392 aa).

This sequence belongs to the LpxB family.

It carries out the reaction a lipid X + a UDP-2-N,3-O-bis[(3R)-3-hydroxyacyl]-alpha-D-glucosamine = a lipid A disaccharide + UDP + H(+). It participates in bacterial outer membrane biogenesis; LPS lipid A biosynthesis. Functionally, condensation of UDP-2,3-diacylglucosamine and 2,3-diacylglucosamine-1-phosphate to form lipid A disaccharide, a precursor of lipid A, a phosphorylated glycolipid that anchors the lipopolysaccharide to the outer membrane of the cell. This Prochlorococcus marinus (strain MIT 9313) protein is Lipid-A-disaccharide synthase.